The following is an 87-amino-acid chain: Serine rich endogenous peptide 17 (87 aa).

A signal peptide spans 1 to 28 (MTGKAPFFVILIAALLLLSSFFFGEVKA). Residues 32 to 87 (KQPKHRKLGNREGDENRSNEIVVQMKARVKRSKSKRGPQKKEPYKKPPCSPPTHPA) are disordered. A compositionally biased stretch (basic and acidic residues) spans 40–49 (GNREGDENRS). The short motif at 51–71 (EIVVQMKARVKRSKSKRGPQK) is the SCOOP motif element. Over residues 58–69 (ARVKRSKSKRGP) the composition is skewed to basic residues. The SxS motif essential for MIK2 binding signature appears at 63-65 (SKS). Over residues 77–87 (KPPCSPPTHPA) the composition is skewed to pro residues.

This sequence belongs to the serine rich endogenous peptide (SCOOP) phytocytokine family. In terms of assembly, interacts with MIK2 (via extracellular leucine-rich repeat domain); this interaction triggers the formation of complex between MIK2 and the BAK1/SERK3 and SERK4 coreceptors, and subsequent BAK1 activation by phosphorylation.

The protein localises to the cell membrane. Its subcellular location is the secreted. The protein resides in the extracellular space. It is found in the apoplast. In terms of biological role, brassicaceae-specific phytocytokine (plant endogenous peptide released into the apoplast) perceived by MIK2 in a BAK1/SERK3 and SERK4 coreceptors-dependent manner, that modulates various physiological and antimicrobial processes including growth prevention and reactive oxygen species (ROS) response regulation. The sequence is that of Serine rich endogenous peptide 17 from Arabidopsis thaliana (Mouse-ear cress).